Reading from the N-terminus, the 172-residue chain is Lytic chitin monooxygenase (172 aa).

A signal peptide spans 1–30 (MHAGRKTAVLIGAALAPVIAVSLPAASASA). Residues His-31 and His-106 each contribute to the Cu cation site. The Chitin-binding type-4 domain occupies 31-168 (HGYISNPPSR…DNAFYACIDV (138 aa)).

Cu(2+) serves as cofactor.

It is found in the secreted. It carries out the reaction [(1-&gt;4)-N-acetyl-beta-D-glucosaminyl]n+m + reduced acceptor + O2 = [(1-&gt;4)-N-acetyl-beta-D-glucosaminyl]m-1-(1-&gt;4)-2-(acetylamino)-2-deoxy-D-glucono-1,5-lactone + [(1-&gt;4)-N-acetyl-beta-D-glucosaminyl]n + acceptor + H2O.. Its pathway is glycan degradation; chitin degradation. Functionally, involved in chitin degradation. Catalyzes the oxidative cleavage of glycosidic bonds in chitin via a copper-dependent mechanism, leading to oxidized chitooligomers with degrees of polymerization of 4-6. Is not active on cellulose. The chain is Lytic chitin monooxygenase from Streptomyces ambofaciens (strain ATCC 23877 / 3486 / DSM 40053 / JCM 4204 / NBRC 12836 / NRRL B-2516).